A 73-amino-acid polypeptide reads, in one-letter code: Translation initiation factor IF-1 (73 aa).

The region spanning 1-72 (MAKEDVIEVE…TKGRITYRFI (72 aa)) is the S1-like domain.

The protein belongs to the IF-1 family. As to quaternary structure, component of the 30S ribosomal translation pre-initiation complex which assembles on the 30S ribosome in the order IF-2 and IF-3, IF-1 and N-formylmethionyl-tRNA(fMet); mRNA recruitment can occur at any time during PIC assembly.

The protein localises to the cytoplasm. Functionally, one of the essential components for the initiation of protein synthesis. Stabilizes the binding of IF-2 and IF-3 on the 30S subunit to which N-formylmethionyl-tRNA(fMet) subsequently binds. Helps modulate mRNA selection, yielding the 30S pre-initiation complex (PIC). Upon addition of the 50S ribosomal subunit IF-1, IF-2 and IF-3 are released leaving the mature 70S translation initiation complex. The sequence is that of Translation initiation factor IF-1 from Lactobacillus johnsonii (strain CNCM I-12250 / La1 / NCC 533).